An 897-amino-acid chain; its full sequence is Coiled-coil domain-containing protein lobo (897 aa).

The disordered stretch occupies residues 27–49 (EIDEQRRSQGSESDFADEMEGEF). The segment covering 40–49 (DFADEMEGEF) has biased composition (acidic residues). Coiled coils occupy residues 269 to 306 (DLKS…DLEL) and 801 to 858 (SLLN…QRLT).

This sequence belongs to the DRC7 family. Testis-specific (at protein level).

The protein resides in the cell projection. Its subcellular location is the cilium. The protein localises to the flagellum. It localises to the cytoplasm. It is found in the cytoskeleton. The protein resides in the cilium axoneme. In terms of biological role, key component of the nexin-dynein regulatory complex (N-DRC), essential for N-DRC integrity. Involved in the regulation of flagellar motility. Involved in sperm motility. Required for the sperm to enter in the coiled storage seminal receptacle (SR) tubule. The protein is Coiled-coil domain-containing protein lobo (lobo) of Drosophila melanogaster (Fruit fly).